Here is a 375-residue protein sequence, read N- to C-terminus: uncharacterized protein (375 aa).

The tract at residues 54 to 78 is disordered; that stretch reads EGIPPPTQSQEPLKPQENISRPIHH.

This is an uncharacterized protein from Bos taurus (Bovine).